The chain runs to 117 residues: Ig kappa chain V region 12F2 (117 aa).

Residues 1 to 6 (LPGARC) form the signal peptide. The framework-1 stretch occupies residues 7–29 (AYDMTQTPASVEVAVGGTVTIKC). A disulfide bond links cysteine 29 and cysteine 86. Residues 30 to 40 (QASQSISTYLS) form a complementarity-determining-1 region. Positions 41-55 (WYQQKPGQRPKLLIY) are framework-2. The segment at 56–62 (RASTLAS) is complementarity-determining-2. The tract at residues 63–94 (GVSSRFKGSGSGTEFTLTISGVECADAATYYC) is framework-3. Positions 95-106 (QQGWSSSNVENV) are complementarity-determining-3. The interval 107–116 (FGGGTEVVVK) is framework-4.

The protein is Ig kappa chain V region 12F2 of Oryctolagus cuniculus (Rabbit).